Consider the following 710-residue polypeptide: Elongation factor G (710 aa).

In terms of domain architecture, tr-type G spans 8–297 (ERVRNIGIAA…AVVDYLPSPI (290 aa)). GTP is bound by residues 17-24 (AHIDAGKT), 96-100 (DTPGH), and 150-153 (NKMD).

The protein belongs to the TRAFAC class translation factor GTPase superfamily. Classic translation factor GTPase family. EF-G/EF-2 subfamily.

The protein localises to the cytoplasm. In terms of biological role, catalyzes the GTP-dependent ribosomal translocation step during translation elongation. During this step, the ribosome changes from the pre-translocational (PRE) to the post-translocational (POST) state as the newly formed A-site-bound peptidyl-tRNA and P-site-bound deacylated tRNA move to the P and E sites, respectively. Catalyzes the coordinated movement of the two tRNA molecules, the mRNA and conformational changes in the ribosome. This Synechococcus sp. (strain JA-3-3Ab) (Cyanobacteria bacterium Yellowstone A-Prime) protein is Elongation factor G.